The primary structure comprises 341 residues: Anthranilate phosphoribosyltransferase (341 aa).

5-phospho-alpha-D-ribose 1-diphosphate-binding positions include glycine 79, glycine 82–aspartate 83, threonine 87, asparagine 89–threonine 92, lysine 107–serine 115, and serine 119. Glycine 79 contacts anthranilate. Mg(2+) is bound at residue serine 91. Asparagine 110 is an anthranilate binding site. Arginine 165 is an anthranilate binding site. The Mg(2+) site is built by aspartate 224 and glutamate 225.

Belongs to the anthranilate phosphoribosyltransferase family. Homodimer. Mg(2+) is required as a cofactor.

The enzyme catalyses N-(5-phospho-beta-D-ribosyl)anthranilate + diphosphate = 5-phospho-alpha-D-ribose 1-diphosphate + anthranilate. It participates in amino-acid biosynthesis; L-tryptophan biosynthesis; L-tryptophan from chorismate: step 2/5. In terms of biological role, catalyzes the transfer of the phosphoribosyl group of 5-phosphorylribose-1-pyrophosphate (PRPP) to anthranilate to yield N-(5'-phosphoribosyl)-anthranilate (PRA). The chain is Anthranilate phosphoribosyltransferase from Dehalococcoides mccartyi (strain ATCC BAA-2266 / KCTC 15142 / 195) (Dehalococcoides ethenogenes (strain 195)).